Reading from the N-terminus, the 285-residue chain is MPSTWLAPAKINLFLHINKRRKDNYHNLQTIFQLLDYCDKLTCTITNNGVIKRTSGNKSVKQDQDLIIKAAKALQQYTGTTLGANLSIVKNIPIGGGLGGGSSDAATTLVALNQLWDTKLTQAQLMKLGLNLGADVPVFIFAQSAWAEGIGNILSPIKTPDHYFLVVFINKHISTKEIFSHYALTISEPQGKIANFSELVNTHNDCLQVAIKLEAEIGVALEHLNTCYNRVGQARMSGTGSCVFNEFLTEKDALAAAKKVPKKWMSFVTRAINNSPIYNWAVAKR.

Residue K10 is part of the active site. 93 to 103 (PIGGGLGGGSS) is a binding site for ATP. D135 is an active-site residue.

The protein belongs to the GHMP kinase family. IspE subfamily.

The enzyme catalyses 4-CDP-2-C-methyl-D-erythritol + ATP = 4-CDP-2-C-methyl-D-erythritol 2-phosphate + ADP + H(+). Its pathway is isoprenoid biosynthesis; isopentenyl diphosphate biosynthesis via DXP pathway; isopentenyl diphosphate from 1-deoxy-D-xylulose 5-phosphate: step 3/6. Its function is as follows. Catalyzes the phosphorylation of the position 2 hydroxy group of 4-diphosphocytidyl-2C-methyl-D-erythritol. The polypeptide is 4-diphosphocytidyl-2-C-methyl-D-erythritol kinase (Vesicomyosocius okutanii subsp. Calyptogena okutanii (strain HA)).